The primary structure comprises 37 residues: Beta-2-microglobulin (37 aa).

The Ig-like C1-type domain maps to 11–37 (GKEDVLICHVSNFHPPDITITLLKNGE).

Belongs to the beta-2-microglobulin family. Heterodimer of an alpha chain and a beta chain. Beta-2-microglobulin is the beta-chain of major histocompatibility complex class I molecules.

It localises to the secreted. Its function is as follows. Component of the class I major histocompatibility complex (MHC). Involved in the presentation of peptide antigens to the immune system. This is Beta-2-microglobulin (b2m) from Oreochromis niloticus (Nile tilapia).